We begin with the raw amino-acid sequence, 552 residues long: Probable ABC transporter ATP-binding/permease protein HI_0664 (552 aa).

Helical transmembrane passes span 22-42 (IMAF…FIMV), 52-72 (LNFD…VLAV), 139-159 (IAPI…FAQL), 162-182 (WFVL…PIIT), 253-273 (EVAV…LFSL), and 278-298 (FAAF…VIAL). The ABC transmembrane type-1 domain occupies 23-307 (MAFTITMGTL…LSNLSSNLLQ (285 aa)). One can recognise an ABC transporter domain in the interval 340-552 (IDVENVNFAY…VIGIENGRMS (213 aa)). 372–379 (GRSGSGKS) is an ATP binding site.

It belongs to the ABC transporter superfamily. Lipid exporter (TC 3.A.1.106) family.

The protein localises to the cell inner membrane. The polypeptide is Probable ABC transporter ATP-binding/permease protein HI_0664 (Haemophilus influenzae (strain ATCC 51907 / DSM 11121 / KW20 / Rd)).